We begin with the raw amino-acid sequence, 139 residues long: Large-conductance mechanosensitive channel (139 aa).

The next 2 helical transmembrane spans lie at 16-36 (VIDL…VDSL) and 83-103 (GQFI…FVAV).

Belongs to the MscL family. In terms of assembly, homopentamer.

It is found in the cell inner membrane. Channel that opens in response to stretch forces in the membrane lipid bilayer. May participate in the regulation of osmotic pressure changes within the cell. The chain is Large-conductance mechanosensitive channel from Aromatoleum aromaticum (strain DSM 19018 / LMG 30748 / EbN1) (Azoarcus sp. (strain EbN1)).